The primary structure comprises 201 residues: Ras-related protein Rab-1B (201 aa).

An N-acetylmethionine modification is found at M1. Residues S17, G18, V19, G20, K21, S22, C23, Y33, T34, E35, S36, S39, and T40 each coordinate GTP. Position 22 (S22) interacts with Mg(2+). Residues 30–45 carry the Switch 1 motif; sequence DDTYTESYISTIGVDF. Mg(2+) contacts are provided by T40 and D63. A switch 2 region; required for interaction with REP1/CHM region spans residues 64-83; the sequence is TAGQERFRTITSSYYRGAHG. The Switch 2 signature appears at 65–80; it reads AGQERFRTITSSYYRG. Residues G66, N121, K122, D124, S151, A152, and K153 each contribute to the GTP site. A disordered region spans residues 174 to 201; the sequence is GPGAASGGERPNLKIDSTPVKPASGGCC. 2 S-geranylgeranyl cysteine lipidation sites follow: C200 and C201. The residue at position 201 (C201) is a Cysteine methyl ester.

The protein belongs to the small GTPase superfamily. Rab family. As to quaternary structure, interacts with MICAL1 and MICAL2. Interacts (GTP-bound form) with MICALCL, MICAL1 and MILCAL3. Interacts with GDI1; the interaction requires the GDP-bound state. Interacts with CHM/REP1; the interaction requires the GDP-bound form and is necessary for prenylation by GGTase II. Interacts with RabGAP TBC1D20. Interacts (in GDP-bound form) with lipid phosphatase MTMR6 (via GRAM domain); the interaction regulates MTMR6 recruitment to the endoplasmic reticulum-Golgi intermediate compartment. Interacts (in GDP-bound form) with lipid phosphatase MTMR7. The cofactor is Mg(2+). Prenylated; by GGTase II, only after interaction of the substrate with Rab escort protein 1 (REP1).

It localises to the cytoplasm. Its subcellular location is the membrane. The protein resides in the preautophagosomal structure membrane. The protein localises to the perinuclear region. It catalyses the reaction GTP + H2O = GDP + phosphate + H(+). Its activity is regulated as follows. Regulated by guanine nucleotide exchange factors (GEFs) which promote the exchange of bound GDP for free GTP. Regulated by GTPase activating proteins (GAPs) including TBC1D20 which increases the GTP hydrolysis activity. Inhibited by GDP dissociation inhibitors (GDIs). In terms of biological role, the small GTPases Rab are key regulators of intracellular membrane trafficking, from the formation of transport vesicles to their fusion with membranes. Rabs cycle between an inactive GDP-bound form and an active GTP-bound form that is able to recruit to membranes different set of downstream effectors directly responsible for vesicle formation, movement, tethering and fusion. Plays a role in the initial events of the autophagic vacuole development which take place at specialized regions of the endoplasmic reticulum. Regulates vesicular transport between the endoplasmic reticulum and successive Golgi compartments. Required to modulate the compacted morphology of the Golgi. Promotes the recruitment of lipid phosphatase MTMR6 to the endoplasmic reticulum-Golgi intermediate compartment. The sequence is that of Ras-related protein Rab-1B (Rab1b) from Mus musculus (Mouse).